The chain runs to 643 residues: Threonine--tRNA ligase (643 aa).

The TGS domain maps to 1–61 (MPIITLPDGA…SVNANINIIT (61 aa)). The catalytic stretch occupies residues 242 to 533 (DHRKIGKKLD…LIEEYEGKFP (292 aa)). Zn(2+) contacts are provided by cysteine 333, histidine 384, and histidine 510.

The protein belongs to the class-II aminoacyl-tRNA synthetase family. In terms of assembly, homodimer. Zn(2+) is required as a cofactor.

Its subcellular location is the cytoplasm. The catalysed reaction is tRNA(Thr) + L-threonine + ATP = L-threonyl-tRNA(Thr) + AMP + diphosphate + H(+). In terms of biological role, catalyzes the attachment of threonine to tRNA(Thr) in a two-step reaction: L-threonine is first activated by ATP to form Thr-AMP and then transferred to the acceptor end of tRNA(Thr). Also edits incorrectly charged L-seryl-tRNA(Thr). This chain is Threonine--tRNA ligase, found in Prochlorococcus marinus (strain SARG / CCMP1375 / SS120).